Reading from the N-terminus, the 1200-residue chain is ATP-dependent helicase/deoxyribonuclease subunit B (1200 aa).

Belongs to the helicase family. AddB/RexB type 2 subfamily. As to quaternary structure, heterodimer of AddA and RexB. Mg(2+) is required as a cofactor.

Its function is as follows. The heterodimer acts as both an ATP-dependent DNA helicase and an ATP-dependent, dual-direction single-stranded exonuclease. Recognizes the chi site generating a DNA molecule suitable for the initiation of homologous recombination. This subunit has 5' -&gt; 3' nuclease activity but not helicase activity. The protein is ATP-dependent helicase/deoxyribonuclease subunit B of Lactiplantibacillus plantarum (strain ATCC BAA-793 / NCIMB 8826 / WCFS1) (Lactobacillus plantarum).